A 365-amino-acid chain; its full sequence is Peptide chain release factor 2 (365 aa).

An N5-methylglutamine modification is found at Q252.

It belongs to the prokaryotic/mitochondrial release factor family. In terms of processing, methylated by PrmC. Methylation increases the termination efficiency of RF2.

The protein resides in the cytoplasm. Functionally, peptide chain release factor 2 directs the termination of translation in response to the peptide chain termination codons UGA and UAA. The polypeptide is Peptide chain release factor 2 (prfB) (Salmonella typhimurium (strain LT2 / SGSC1412 / ATCC 700720)).